The sequence spans 430 residues: Glutamate-1-semialdehyde 2,1-aminomutase (430 aa).

The residue at position 265 (Lys265) is an N6-(pyridoxal phosphate)lysine.

The protein belongs to the class-III pyridoxal-phosphate-dependent aminotransferase family. HemL subfamily. Homodimer. It depends on pyridoxal 5'-phosphate as a cofactor.

The protein localises to the cytoplasm. The enzyme catalyses (S)-4-amino-5-oxopentanoate = 5-aminolevulinate. It participates in porphyrin-containing compound metabolism; protoporphyrin-IX biosynthesis; 5-aminolevulinate from L-glutamyl-tRNA(Glu): step 2/2. The sequence is that of Glutamate-1-semialdehyde 2,1-aminomutase from Shewanella putrefaciens (strain CN-32 / ATCC BAA-453).